Consider the following 621-residue polypeptide: UvrABC system protein C (621 aa).

A GIY-YIG domain is found at threonine 20–valine 98. Residues aspartate 207–methionine 242 form the UVR domain.

Belongs to the UvrC family. As to quaternary structure, interacts with UvrB in an incision complex.

It is found in the cytoplasm. Functionally, the UvrABC repair system catalyzes the recognition and processing of DNA lesions. UvrC both incises the 5' and 3' sides of the lesion. The N-terminal half is responsible for the 3' incision and the C-terminal half is responsible for the 5' incision. In Xylella fastidiosa (strain M23), this protein is UvrABC system protein C.